The sequence spans 254 residues: Attacin-A (254 aa).

Positions 1–18 are cleaved as a signal peptide; sequence MFTYKLILGLVLVVSASA. A propeptide spanning residues 19-62 is cleaved from the precursor; sequence RYLVFEDLEGESYLVPNQAEDEQVLEGEPFYENAVQLASPRVRR.

This sequence belongs to the attacin/sarcotoxin-2 family.

The protein localises to the secreted. Its function is as follows. Hemolymph antibacterial protein. The sequence is that of Attacin-A from Trichoplusia ni (Cabbage looper).